A 129-amino-acid polypeptide reads, in one-letter code: M-zodatoxin-Lt8b (129 aa).

The N-terminal stretch at 1–20 (MKYFVVALALVAAFACIAES) is a signal peptide. The propeptide occupies 21–60 (KPAESEHELAEVEEENELADLEDAVWLEHLADLSDLEEAR). Positions 57 to 60 (EEAR) match the Processing quadruplet motif motif.

Post-translationally, cleavage of the propeptide depends on the processing quadruplet motif (XXXR, with at least one of X being E). In terms of tissue distribution, expressed by the venom gland.

The protein localises to the secreted. Functionally, insecticidal, cytolytic and antimicrobial peptide. Forms voltage-dependent, ion-permeable channels in membranes. At high concentration causes cell membrane lysis. This chain is M-zodatoxin-Lt8b (cit 1-2), found in Lachesana tarabaevi (Spider).